A 282-amino-acid polypeptide reads, in one-letter code: NH(3)-dependent NAD(+) synthetase (282 aa).

Gly-51–Ser-58 contributes to the ATP binding site. Asp-57 lines the Mg(2+) pocket. Residue Arg-148 coordinates deamido-NAD(+). Thr-168 contributes to the ATP binding site. Glu-173 serves as a coordination point for Mg(2+). Deamido-NAD(+) contacts are provided by Lys-181 and Asp-188. Lys-197 and Thr-219 together coordinate ATP. Position 268–269 (His-268–Lys-269) interacts with deamido-NAD(+).

The protein belongs to the NAD synthetase family. Homodimer.

The enzyme catalyses deamido-NAD(+) + NH4(+) + ATP = AMP + diphosphate + NAD(+) + H(+). The protein operates within cofactor biosynthesis; NAD(+) biosynthesis; NAD(+) from deamido-NAD(+) (ammonia route): step 1/1. Catalyzes the ATP-dependent amidation of deamido-NAD to form NAD. Uses ammonia as a nitrogen source. In Burkholderia cenocepacia (strain HI2424), this protein is NH(3)-dependent NAD(+) synthetase.